The following is a 205-amino-acid chain: Small ribosomal subunit protein uS4 (205 aa).

Positions 18 to 49 (NIWGRPKSPVNKREYGPGQHGQRRKGKLSDFG) are disordered. The S4 RNA-binding domain occupies 94-157 (RRLDTVVYRA…KQLALVLEAN (64 aa)).

The protein belongs to the universal ribosomal protein uS4 family. Part of the 30S ribosomal subunit. Contacts protein S5. The interaction surface between S4 and S5 is involved in control of translational fidelity.

Functionally, one of the primary rRNA binding proteins, it binds directly to 16S rRNA where it nucleates assembly of the body of the 30S subunit. Its function is as follows. With S5 and S12 plays an important role in translational accuracy. The polypeptide is Small ribosomal subunit protein uS4 (Nitrobacter winogradskyi (strain ATCC 25391 / DSM 10237 / CIP 104748 / NCIMB 11846 / Nb-255)).